A 249-amino-acid chain; its full sequence is Eukaryotic translation initiation factor 6 (249 aa).

Belongs to the eIF-6 family. In terms of assembly, monomer. Associates with the 60S ribosomal subunit.

The protein resides in the cytoplasm. It localises to the nucleus. The protein localises to the nucleolus. In terms of biological role, binds to the 60S ribosomal subunit and prevents its association with the 40S ribosomal subunit to form the 80S initiation complex in the cytoplasm. May also be involved in ribosome biogenesis. The sequence is that of Eukaryotic translation initiation factor 6 from Babesia bovis.